A 447-amino-acid polypeptide reads, in one-letter code: Signal recognition particle protein (447 aa).

Residues 108-115 (GLQGSGKT), 190-194 (DTAGR), and 248-251 (TKLD) each bind GTP.

Belongs to the GTP-binding SRP family. SRP54 subfamily. In terms of assembly, part of the signal recognition particle protein translocation system, which is composed of SRP and FtsY. Interacts with RNA.

Its subcellular location is the cytoplasm. The enzyme catalyses GTP + H2O = GDP + phosphate + H(+). Involved in targeting and insertion of nascent membrane proteins into the cytoplasmic membrane. Binds to the hydrophobic signal sequence of the ribosome-nascent chain (RNC) as it emerges from the ribosomes. The SRP-RNC complex is then targeted to the cytoplasmic membrane where it interacts with the SRP receptor FtsY. This chain is Signal recognition particle protein, found in Mycoplasma mycoides.